Here is a 175-residue protein sequence, read N- to C-terminus: Large ribosomal subunit protein uL10 (175 aa).

Belongs to the universal ribosomal protein uL10 family. As to quaternary structure, part of the ribosomal stalk of the 50S ribosomal subunit. The N-terminus interacts with L11 and the large rRNA to form the base of the stalk. The C-terminus forms an elongated spine to which L12 dimers bind in a sequential fashion forming a multimeric L10(L12)X complex.

Its function is as follows. Forms part of the ribosomal stalk, playing a central role in the interaction of the ribosome with GTP-bound translation factors. The sequence is that of Large ribosomal subunit protein uL10 (rplJ) from Xylella fastidiosa (strain 9a5c).